Here is a 217-residue protein sequence, read N- to C-terminus: Protein GrpE (217 aa).

It belongs to the GrpE family. In terms of assembly, homodimer.

Its subcellular location is the cytoplasm. In terms of biological role, participates actively in the response to hyperosmotic and heat shock by preventing the aggregation of stress-denatured proteins, in association with DnaK and GrpE. It is the nucleotide exchange factor for DnaK and may function as a thermosensor. Unfolded proteins bind initially to DnaJ; upon interaction with the DnaJ-bound protein, DnaK hydrolyzes its bound ATP, resulting in the formation of a stable complex. GrpE releases ADP from DnaK; ATP binding to DnaK triggers the release of the substrate protein, thus completing the reaction cycle. Several rounds of ATP-dependent interactions between DnaJ, DnaK and GrpE are required for fully efficient folding. This chain is Protein GrpE, found in Mycoplasma genitalium (strain ATCC 33530 / DSM 19775 / NCTC 10195 / G37) (Mycoplasmoides genitalium).